The following is a 179-amino-acid chain: NAD(P)H-quinone oxidoreductase subunit I, chloroplastic (179 aa).

4Fe-4S ferredoxin-type domains are found at residues 55–84 (GRIHFEFDKCIACEVCVRVCPIDLPVVDWR) and 95–124 (LNYSIDFGICIFCGNCVEYCPTNCLSMTEE). Residues C64, C67, C70, C74, C104, C107, C110, and C114 each coordinate [4Fe-4S] cluster.

Belongs to the complex I 23 kDa subunit family. NDH is composed of at least 16 different subunits, 5 of which are encoded in the nucleus. It depends on [4Fe-4S] cluster as a cofactor.

It is found in the plastid. Its subcellular location is the chloroplast thylakoid membrane. It catalyses the reaction a plastoquinone + NADH + (n+1) H(+)(in) = a plastoquinol + NAD(+) + n H(+)(out). It carries out the reaction a plastoquinone + NADPH + (n+1) H(+)(in) = a plastoquinol + NADP(+) + n H(+)(out). Functionally, NDH shuttles electrons from NAD(P)H:plastoquinone, via FMN and iron-sulfur (Fe-S) centers, to quinones in the photosynthetic chain and possibly in a chloroplast respiratory chain. The immediate electron acceptor for the enzyme in this species is believed to be plastoquinone. Couples the redox reaction to proton translocation, and thus conserves the redox energy in a proton gradient. The polypeptide is NAD(P)H-quinone oxidoreductase subunit I, chloroplastic (Nuphar advena (Common spatterdock)).